Reading from the N-terminus, the 117-residue chain is Small ribosomal subunit protein bS6 (117 aa).

Positions 92-117 (KVDEHPEGPSIQMQKREERDNRRERR) are disordered. Positions 105-117 (QKREERDNRRERR) are enriched in basic and acidic residues.

It belongs to the bacterial ribosomal protein bS6 family.

In terms of biological role, binds together with bS18 to 16S ribosomal RNA. The polypeptide is Small ribosomal subunit protein bS6 (Dinoroseobacter shibae (strain DSM 16493 / NCIMB 14021 / DFL 12)).